A 492-amino-acid chain; its full sequence is DEAD-box ATP-dependent RNA helicase RhpA (492 aa).

Positions 20–48 (PSFNDLGLKESVLKSVYEAGFTSPSPIQE) match the Q motif motif. The 170-residue stretch at 51 to 220 (IPAVLQGRDV…DKILENPIKI (170 aa)) folds into the Helicase ATP-binding domain. 64–71 (AQTGTGKT) is an ATP binding site. A DEAD box motif is present at residues 168 to 171 (DESD). In terms of domain architecture, Helicase C-terminal spans 231–393 (DITQRFYVIN…EIPTINENQI (163 aa)). The disordered stretch occupies residues 445–492 (AIQNPKEKTPKPSHKKTPQHERARSFKKGQHRDRHPKTNHHSKKPKRR). Residues 469–492 (SFKKGQHRDRHPKTNHHSKKPKRR) show a composition bias toward basic residues.

Belongs to the DEAD box helicase family. In terms of assembly, homodimer. Interacts with RNase J (rnj), might be a member of a minimal RNA degradosome complex.

The protein localises to the cytoplasm. The enzyme catalyses ATP + H2O = ADP + phosphate + H(+). Its function is as follows. DEAD-box RNA helicase probably involved in RNA degradation. Unwinds dsRNA in both 5'- and 3'-directions. Background RNA-dependent ATPase activity is stimulated about 5-fold by RNaseJ (rnj). Stimulates the dsRNase activity of RNase J. This is DEAD-box ATP-dependent RNA helicase RhpA (rhpA) from Helicobacter pylori (strain B128).